Here is a 404-residue protein sequence, read N- to C-terminus: Keratin, type I cuticular Ha3-I (404 aa).

The head stretch occupies residues 1–56 (MSYSCGLPSLSCRTSCSSRPCVPPSCHGCTLPGACNIPANVSNCNWFCEGSFNGSE). Positions 56 to 367 (EKETMQFLND…SLLESEDCKL (312 aa)) constitute an IF rod domain. The coil 1A stretch occupies residues 57–91 (KETMQFLNDRLASYLEKVRQLERDNAELENLIRER). A linker 1 region spans residues 92–102 (SQQQEPLVCAS). The coil 1B stretch occupies residues 103-203 (YQSYFKTIEE…HEQEVNTLRC (101 aa)). Residues 204–219 (QLGDRLNVEVDAAPTV) are linker 12. Residues 220 to 363 (DLNQVLNETR…NTYRSLLESE (144 aa)) are coil 2. Residues 364 to 404 (DCKLPSNPCATTNACDKSTGPCISNPCGLRARCGPCNTFGY) form a tail region.

The protein belongs to the intermediate filament family. In terms of tissue distribution, expressed in the hair follicles.

This Homo sapiens (Human) protein is Keratin, type I cuticular Ha3-I (KRT33A).